Here is a 147-residue protein sequence, read N- to C-terminus: UPF0178 protein Patl_1318 (147 aa).

Belongs to the UPF0178 family.

This Pseudoalteromonas atlantica (strain T6c / ATCC BAA-1087) protein is UPF0178 protein Patl_1318.